A 382-amino-acid polypeptide reads, in one-letter code: Chaperone protein DnaJ (382 aa).

One can recognise a J domain in the interval 5–70 (DYYELLGVQK…EKRAAYDRYG (66 aa)). The CR-type zinc-finger motif lies at 146–224 (GAEKEISFRK…CHGEGRVRRT (79 aa)). Cys-159, Cys-162, Cys-176, Cys-179, Cys-198, Cys-201, Cys-212, and Cys-215 together coordinate Zn(2+). CXXCXGXG motif repeat units lie at residues 159-166 (CERCDGSG), 176-183 (CPTCRGAG), 198-205 (CPTCGGMG), and 212-219 (CTVCHGEG). Residues 230–250 (RIPPGVDNGSRLRSSGNGEAG) form a disordered region.

This sequence belongs to the DnaJ family. Homodimer. Requires Zn(2+) as cofactor.

It localises to the cytoplasm. Functionally, participates actively in the response to hyperosmotic and heat shock by preventing the aggregation of stress-denatured proteins and by disaggregating proteins, also in an autonomous, DnaK-independent fashion. Unfolded proteins bind initially to DnaJ; upon interaction with the DnaJ-bound protein, DnaK hydrolyzes its bound ATP, resulting in the formation of a stable complex. GrpE releases ADP from DnaK; ATP binding to DnaK triggers the release of the substrate protein, thus completing the reaction cycle. Several rounds of ATP-dependent interactions between DnaJ, DnaK and GrpE are required for fully efficient folding. Also involved, together with DnaK and GrpE, in the DNA replication of plasmids through activation of initiation proteins. This chain is Chaperone protein DnaJ, found in Opitutus terrae (strain DSM 11246 / JCM 15787 / PB90-1).